Consider the following 123-residue polypeptide: Fluoride-specific ion channel FluC (123 aa).

Helical transmembrane passes span 5–25, 29–49, 65–85, and 94–114; these read LIIG…SGII, FGIP…VGFV, LIIT…YETF, and IKFL…IYVG. The Na(+) site is built by Gly-72 and Thr-75.

Belongs to the fluoride channel Fluc/FEX (TC 1.A.43) family.

Its subcellular location is the cell membrane. The catalysed reaction is fluoride(in) = fluoride(out). Na(+) is not transported, but it plays an essential structural role and its presence is essential for fluoride channel function. Its function is as follows. Fluoride-specific ion channel. Important for reducing fluoride concentration in the cell, thus reducing its toxicity. The sequence is that of Fluoride-specific ion channel FluC from Methanococcus aeolicus (strain ATCC BAA-1280 / DSM 17508 / OCM 812 / Nankai-3).